A 176-amino-acid polypeptide reads, in one-letter code: Mitochondrial inner membrane protein Mpv17 (176 aa).

The next 4 membrane-spanning stretches (helical) occupy residues 18 to 38, 53 to 73, 94 to 114, and 131 to 151; these read VQVL…QQLV, TMVS…YKVL, GGFA…LNGL, and LITN…LVPL.

The protein belongs to the peroxisomal membrane protein PXMP2/4 family. As to expression, ubiquitous. Expressed in pancreas, kidney, muscle, liver, lung, placenta, brain and heart.

It is found in the mitochondrion inner membrane. Its function is as follows. Non-selective channel that modulates the membrane potential under normal conditions and oxidative stress, and is involved in mitochondrial homeostasis. Involved in mitochondrial deoxynucleoside triphosphates (dNTP) pool homeostasis and mitochondrial DNA (mtDNA) maintenance. May be involved in the regulation of reactive oxygen species metabolism and the control of oxidative phosphorylation. The sequence is that of Mitochondrial inner membrane protein Mpv17 from Homo sapiens (Human).